The chain runs to 409 residues: MLMNIVTLISWDFKRNNESFQRAIINGYDYWSRILDDHGVEKYVILLTCNRVELYYRGDPFDVQEKGYNIISDDMAINHLFHVAAGLDSMSIGENEVLKQVKQAYEKSSSMGKSDKFLSLIFQRAISVGKLVRSKTGIGKGKVSIPSIVYDIVRKNGGNKILLVGNGMLASEIAPYFSYPQYKVTVAGRNIDHVRAFAEKYEYEYVLINDIDSLIKNNDVIITATSSKTPIVEERSLMPGKLFIDLGNPPNIERGNNVITLDEIYEISKKNEMLREEKINQAEILIENEMKATMNKIKDLMIDDIFSQFYRFASVVQTMEIQKFRKMHPEVNENDLEALAHSIINKILNVPVTTLKAVSRSQGNSDFNRLFESFSSNFNDIVSAALQSYEGLRDTQSLRDRTRQLLQKS.

Substrate-binding positions include 48–51 (TCNR), serine 89, 94–96 (ENE), and glutamine 100. Cysteine 49 serves as the catalytic Nucleophile. 165 to 170 (GNGMLA) is an NADP(+) binding site.

The protein belongs to the glutamyl-tRNA reductase family. Homodimer.

It catalyses the reaction (S)-4-amino-5-oxopentanoate + tRNA(Glu) + NADP(+) = L-glutamyl-tRNA(Glu) + NADPH + H(+). It participates in porphyrin-containing compound metabolism; protoporphyrin-IX biosynthesis; 5-aminolevulinate from L-glutamyl-tRNA(Glu): step 1/2. Catalyzes the NADPH-dependent reduction of glutamyl-tRNA(Glu) to glutamate 1-semialdehyde (GSA). This chain is Glutamyl-tRNA reductase, found in Thermoplasma volcanium (strain ATCC 51530 / DSM 4299 / JCM 9571 / NBRC 15438 / GSS1).